We begin with the raw amino-acid sequence, 370 residues long: Anhydro-N-acetylmuramic acid kinase (370 aa).

13-20 (GTSMDGVD) contacts ATP.

It belongs to the anhydro-N-acetylmuramic acid kinase family.

It catalyses the reaction 1,6-anhydro-N-acetyl-beta-muramate + ATP + H2O = N-acetyl-D-muramate 6-phosphate + ADP + H(+). The protein operates within amino-sugar metabolism; 1,6-anhydro-N-acetylmuramate degradation. It functions in the pathway cell wall biogenesis; peptidoglycan recycling. Its function is as follows. Catalyzes the specific phosphorylation of 1,6-anhydro-N-acetylmuramic acid (anhMurNAc) with the simultaneous cleavage of the 1,6-anhydro ring, generating MurNAc-6-P. Is required for the utilization of anhMurNAc either imported from the medium or derived from its own cell wall murein, and thus plays a role in cell wall recycling. This Shewanella denitrificans (strain OS217 / ATCC BAA-1090 / DSM 15013) protein is Anhydro-N-acetylmuramic acid kinase.